The chain runs to 82 residues: Small ribosomal subunit protein uS17 (82 aa).

This sequence belongs to the universal ribosomal protein uS17 family. In terms of assembly, part of the 30S ribosomal subunit.

In terms of biological role, one of the primary rRNA binding proteins, it binds specifically to the 5'-end of 16S ribosomal RNA. The polypeptide is Small ribosomal subunit protein uS17 (Rickettsia typhi (strain ATCC VR-144 / Wilmington)).